A 203-amino-acid polypeptide reads, in one-letter code: Pectinesterase inhibitor 12 (203 aa).

The first 26 residues, 1-26 (MRMSKALAAVVAISVSLSAAAMGVDA), serve as a signal peptide directing secretion. 2 disulfide bridges follow: cysteine 32–cysteine 47 and cysteine 100–cysteine 140.

Belongs to the PMEI family.

Its subcellular location is the secreted. It is found in the extracellular space. The protein localises to the apoplast. Functionally, pectin methylesterase (PME) inhibitor that inhibits PME in vitro. The protein is Pectinesterase inhibitor 12 of Oryza sativa subsp. japonica (Rice).